Reading from the N-terminus, the 446-residue chain is Chromosomal replication initiator protein DnaA (446 aa).

Residues 1–81 are domain I, interacts with DnaA modulators; the sequence is MENISDLWNS…AKLAIRFIIP (81 aa). The tract at residues 81-109 is domain II; the sequence is PQSQAEEDIDLPPVKPNPAQDDSAHLPQS. The interval 110–326 is domain III, AAA+ region; the sequence is MLNPKYTFDT…GALIRVVAYS (217 aa). ATP is bound by residues glycine 154, glycine 156, lysine 157, and threonine 158. The segment at 327–446 is domain IV, binds dsDNA; it reads SLINKDINAD…QVEEINGILK (120 aa).

Belongs to the DnaA family. Oligomerizes as a right-handed, spiral filament on DNA at oriC.

It is found in the cytoplasm. In terms of biological role, plays an essential role in the initiation and regulation of chromosomal replication. ATP-DnaA binds to the origin of replication (oriC) to initiate formation of the DNA replication initiation complex once per cell cycle. Binds the DnaA box (a 9 base pair repeat at the origin) and separates the double-stranded (ds)DNA. Forms a right-handed helical filament on oriC DNA; dsDNA binds to the exterior of the filament while single-stranded (ss)DNA is stabiized in the filament's interior. The ATP-DnaA-oriC complex binds and stabilizes one strand of the AT-rich DNA unwinding element (DUE), permitting loading of DNA polymerase. After initiation quickly degrades to an ADP-DnaA complex that is not apt for DNA replication. Binds acidic phospholipids. The sequence is that of Chromosomal replication initiator protein DnaA from Bacillus cereus (strain B4264).